The chain runs to 404 residues: MSAKRRLFTSESVTEGHPDKICDQISDAILDAILEKDPNARVACETSVTTGLVLVSGEITTSTYVDIPRIVRDTVREIGYTRAKFGFDADTCAVLTAIDEQSPDIAMGVDQALEAREGQMTDEEIEAIGAGDQGLMFGFACNETEELMPLPISLAHRLSRRLAEVRKTDVLPYLRPDGKTQVTIEYDENGKPVRVDTIVISTQHHPEIEHDQIERDMKEHVIKPIVPAELLDENTKYFINPTGRFVIGGPQGDAGLTGRKIIVDTYGGYARHGGGAFSGKDPTKVDRSAAYAARYVAKNIVAAGLADKCEVQLAYAIGVARPVSISIDTFGTGKVSEDVLIEVVRNNFDLRPAGIIKMLDLRRPIYKQTAAYGHFGRTDVDLPWERTDKAAVLKEQALALAKNE.

His17 is an ATP binding site. Asp19 lines the Mg(2+) pocket. Glu45 contacts K(+). Positions 58 and 101 each coordinate L-methionine. Residues 101 to 111 (QSPDIAMGVDQ) form a flexible loop region. ATP contacts are provided by residues 177–179 (DGK), 244–245 (RF), Asp253, 259–260 (RK), Ala276, and Lys280. Residue Asp253 participates in L-methionine binding. An L-methionine-binding site is contributed by Lys284.

Belongs to the AdoMet synthase family. As to quaternary structure, homotetramer; dimer of dimers. The cofactor is Mg(2+). K(+) serves as cofactor.

The protein localises to the cytoplasm. The enzyme catalyses L-methionine + ATP + H2O = S-adenosyl-L-methionine + phosphate + diphosphate. The protein operates within amino-acid biosynthesis; S-adenosyl-L-methionine biosynthesis; S-adenosyl-L-methionine from L-methionine: step 1/1. In terms of biological role, catalyzes the formation of S-adenosylmethionine (AdoMet) from methionine and ATP. The overall synthetic reaction is composed of two sequential steps, AdoMet formation and the subsequent tripolyphosphate hydrolysis which occurs prior to release of AdoMet from the enzyme. This is S-adenosylmethionine synthase from Geobacillus thermodenitrificans (strain NG80-2).